The following is a 74-amino-acid chain: Major structural pilin EpdE (74 aa).

Positions 1 to 12 (MKFLEKLTSKKG) are excised as a propeptide. At glutamine 13 the chain carries Pyrrolidone carboxylic acid. The QXSXEXXXL motif lies at 13–21 (QIAMELGIL).

In terms of processing, the N-terminus is cleaved by the prepilin peptidase EppA, which recognizes the class III signal sequence. N-glycosylated. Glycosylated with an N-linked branched pentasaccharide glycan. May contain glycans at three sites. Glycosylation is AglB-dependent. The N-glycosylation does not occur unless the signal peptide has been cleaved first.

Its subcellular location is the secreted. The protein localises to the cell surface. It is found in the fimbrium. Major component of the type IV-like pili. This is Major structural pilin EpdE from Methanococcus maripaludis (strain DSM 14266 / JCM 13030 / NBRC 101832 / S2 / LL).